Here is an 892-residue protein sequence, read N- to C-terminus: MTDVTLKALAAERQVSVDRLVQQFADAGIRKSADDSVSAQEKQTLLAHLNREAVSGPDKLTLQRKTRSTLNIPGTGGKSKSVQIEVRKKRTFVKRDPQEAERLAAEEQAQREAEEQARREAEEQAKREAQQKAEREAAEQAKREAAEKAKREAAEKDKVSNQQTDDMTKTAQAEKARRENEAAELKRKAEEEARRKLEEEARRVAEEARRMAEENKWTATPEPVEDTSDYHVTTSQHARQAEDENDREVEGGRGRGRNAKAARPAKKGKHAESKADREEARAAVRGGKGGKRKGSSLQQGFQKPAQAVNRDVVIGETITVGELANKMAVKGSQVIKAMMKLGAMATINQVIDQETAQLVAEEMGHKVILRRENELEEAVMSDRDTGAAAEPRAPVVTIMGHVDHGKTSLLDYIRSTKVASGEAGGITQHIGAYHVETDNGMITFLDTPGHAAFTSMRARGAQATDIVVLVVAADDGVMPQTIEAIQHAKAAGVPVVVAVNKIDKPEADPDRVKNELSQYGILPEEWGGESQFVHVSAKAGTGIDELLDAILLQAEVLELKAVRKGMASGAVIESFLDKGRGPVATVLVREGTLHKGDIVLCGFEYGRVRAMRNELGQEVLEAGPSIPVEILGLSGVPAAGDEVTVVRDEKKAREVALYRQGKFREVKLARQQKSKLENMFANMTEGEVHEVNIVLKADVQGSVEAISDSLLKLSTDEVKVKIIGSGVGGITETDATLAAASNAILVGFNVRADASARKVIESESLDLRYYSVIYNLIDEVKAAMSGMLSPELKQQIIGLAEVRDVFKSPKFGAIAGCMVTEGTIKRHNPIRVLRDNVVIYEGELESLRRFKDDVNEVRNGMECGIGVKNYNDVRVGDMIEVFEIIEIQRTIA.

A disordered region spans residues 88–305 (KKRTFVKRDP…SLQQGFQKPA (218 aa)). 2 stretches are compositionally biased toward basic and acidic residues: residues 93-159 (VKRD…KDKV) and 166-216 (DMTK…EENK). The span at 254–269 (GRGRNAKAARPAKKGK) shows a compositional bias: basic residues. Residues 270–282 (HAESKADREEARA) are compositionally biased toward basic and acidic residues. Positions 391 to 560 (PRAPVVTIMG…LLQAEVLELK (170 aa)) constitute a tr-type G domain. A G1 region spans residues 400-407 (GHVDHGKT). 400–407 (GHVDHGKT) is a binding site for GTP. The tract at residues 425–429 (GITQH) is G2. A G3 region spans residues 446–449 (DTPG). Residues 446–450 (DTPGH) and 500–503 (NKID) each bind GTP. The tract at residues 500 to 503 (NKID) is G4. Residues 536-538 (SAK) form a G5 region.

It belongs to the TRAFAC class translation factor GTPase superfamily. Classic translation factor GTPase family. IF-2 subfamily.

It is found in the cytoplasm. In terms of biological role, one of the essential components for the initiation of protein synthesis. Protects formylmethionyl-tRNA from spontaneous hydrolysis and promotes its binding to the 30S ribosomal subunits. Also involved in the hydrolysis of GTP during the formation of the 70S ribosomal complex. The sequence is that of Translation initiation factor IF-2 from Salmonella agona (strain SL483).